The chain runs to 773 residues: Transducin-like enhancer protein 4 (773 aa).

Disordered stretches follow at residues 1–22, 140–162, and 182–357; these read MIRD…QPAQ, HGHG…AIPP, and LPIK…DPLA. The q domain stretch occupies residues 1–136; the sequence is MIRDLSKMYP…AIIGQQLQAQ (136 aa). The interval 137 to 204 is GP domain; that stretch reads HLSHGHGLPV…HQRDRDSIKS (68 aa). Positions 183 to 202 are enriched in basic and acidic residues; it reads PIKDEKKHHDNDHQRDRDSI. Low complexity predominate over residues 203–214; the sequence is KSSSVSPSASFR. A ccN domain region spans residues 205 to 274; sequence SSVSPSASFR…SPRGSPAHSP (70 aa). A phosphoserine mark is found at S208, S212, S216, and S222. Over residues 215–252 the composition is skewed to basic and acidic residues; it reads GSEKHRNSTDYSSESKKQKTEEKEIAARYDSDGEKSDD. K237 bears the N6-acetyllysine mark. S245 carries the phosphoserine modification. S250 bears the Phosphoserine; by CK2 mark. A Phosphoserine; by CDK1 modification is found at S265. A phosphoserine mark is found at S269 and S273. Over residues 273 to 289 the composition is skewed to basic and acidic residues; sequence SPRENGLDKTRLLKKDA. Positions 275–452 are SP domain; it reads RENGLDKTRL…PGGKPAYSFH (178 aa). K281 carries the post-translational modification N6-acetyllysine. Residues 290–305 are compositionally biased toward low complexity; the sequence is PISPASVASSSSTPSS. S292 carries the phosphoserine modification. Positions 317–328 are enriched in polar residues; the sequence is TTPVSKSNTPTP. T318 bears the Phosphothreonine mark. Phosphoserine occurs at positions 321 and 323. T325, T327, T334, and T340 each carry phosphothreonine. S419 is subject to Phosphoserine. WD repeat units lie at residues 485-523, 531-570, 575-614, 617-656, 658-697, 699-738, and 740-773; these read NHGE…NKSP, NRDN…PRIK, SSAP…LVRQ, GHTD…QLQQ, DFTS…KYQL, LHES…SIFQ, and KESS…EVIY.

This sequence belongs to the WD repeat Groucho/TLE family. In terms of assembly, homooligomer and heterooligomer with other family members. Interacts with PAX5. Interacts with LEF1, TCF7, TCF7L1 and TCF7L2. Interacts with ZNF703; TLE4 may mediate ZNF703 transcriptional repression. Interacts with SIX3 and SIX6. Interacts with PAX2. Interacts with TLE1. Phosphorylated. PAX5 binding increases phosphorylation. In terms of processing, ubiquitinated by XIAP/BIRC4. Expressed in bone marrow-derived macrophages.

Its subcellular location is the nucleus. In terms of biological role, transcriptional corepressor that binds to a number of transcription factors. Inhibits the transcriptional activation mediated by PAX5, and by CTNNB1 and TCF family members in Wnt signaling. The effects of full-length TLE family members may be modulated by association with dominant-negative AES. Essential for the transcriptional repressor activity of SIX3 during retina and lens development and for SIX3 transcriptional auto-repression. Involved in transcriptional repression of GNRHR and enhances MSX1-mediated transcriptional repression of CGA/alpha-GSU. In Mus musculus (Mouse), this protein is Transducin-like enhancer protein 4 (Tle4).